The primary structure comprises 187 residues: Cytochrome b-245 chaperone 1 (187 aa).

A helical transmembrane segment spans residues 20–42 (GIRSWSLLVGILSTGLAAAYYSG). Residues 167–187 (ESPSERSQSSDSEPDGPGGQS) are disordered. Phosphoserine occurs at positions 168 and 170.

This sequence belongs to the CYBC1 family. As to quaternary structure, interacts with CYBB; CYBC1 may act as a chaperone stabilizing Cytochrome b-245 heterodimer.

The protein resides in the endoplasmic reticulum membrane. In terms of biological role, functions as a chaperone necessary for a stable expression of the CYBA and CYBB subunits of the cytochrome b-245 heterodimer. Controls the phagocyte respiratory burst and is essential for innate immunity. The polypeptide is Cytochrome b-245 chaperone 1 (Mus musculus (Mouse)).